The primary structure comprises 471 residues: Glycosyl hydrolase family 109 protein 1 (471 aa).

An N-terminal signal peptide occupies residues 1-15; sequence MIKNLSTFFVGIALS. The N-palmitoyl cysteine moiety is linked to residue Cys-16. Cys-16 carries the S-diacylglycerol cysteine lipid modification. NAD(+) is bound by residues 70–71, Asp-92, 141–144, 161–162, and Asn-190; these read MR, WKHH, and EV. Substrate is bound by residues Tyr-219, Arg-235, 247-250, and Tyr-325; that span reads YATH. NAD(+) is bound at residue Tyr-247.

The protein belongs to the Gfo/Idh/MocA family. Glycosyl hydrolase 109 subfamily. Requires NAD(+) as cofactor.

The protein localises to the cell membrane. Its function is as follows. Glycosidase. This Phocaeicola vulgatus (strain ATCC 8482 / DSM 1447 / JCM 5826 / CCUG 4940 / NBRC 14291 / NCTC 11154) (Bacteroides vulgatus) protein is Glycosyl hydrolase family 109 protein 1.